A 451-amino-acid polypeptide reads, in one-letter code: MNVSHRRYHIITFGCQMNKADSERMAGILENLGMTYTDDPNQADLVLYNTCSIRDNAEQKVYSYLGRQAKRKQVEPELTLVVAGCVAQQEGEQLLRRVPELDLVMGPQHANRLDQLLEQVWAGSQVVATESLHIMEDITKPRRESTVSAWVNIIYGCNERCSYCVVPNVRGVEQSRTPEAIYGEMEVLAQQGFKEVTLLGQNIDAYGRDLPGTTPSGRHLHTLTDLLYHVHDIEGIDRLRFATSHPRYFTERLIQACQELPKVCEHFHIPFQSGDNDILKAMKRGYTREKYLQIIEKIRRYMPDAAISADVIVGFPGETEAQFENTLNLIEEVGFDLLNTAAYSPRPGTPAAFWDNQLSEEVKGDRLQRLNHLVSTQAMERSQRYLGRVEEVLVEGENLKSPGQVMGRTRGNRLTFFQGEISELLGKTVPVKITEARAFSLTGEALSLVTA.

The MTTase N-terminal domain occupies 6–122 (RRYHIITFGC…LDQLLEQVWA (117 aa)). Cysteine 15, cysteine 51, cysteine 85, cysteine 157, cysteine 161, and cysteine 164 together coordinate [4Fe-4S] cluster. The 242-residue stretch at 143-384 (RESTVSAWVN…STQAMERSQR (242 aa)) folds into the Radical SAM core domain. The TRAM domain maps to 383–447 (QRYLGRVEEV…AFSLTGEALS (65 aa)).

The protein belongs to the methylthiotransferase family. MiaB subfamily. As to quaternary structure, monomer. [4Fe-4S] cluster is required as a cofactor.

It is found in the cytoplasm. It catalyses the reaction N(6)-dimethylallyladenosine(37) in tRNA + (sulfur carrier)-SH + AH2 + 2 S-adenosyl-L-methionine = 2-methylsulfanyl-N(6)-dimethylallyladenosine(37) in tRNA + (sulfur carrier)-H + 5'-deoxyadenosine + L-methionine + A + S-adenosyl-L-homocysteine + 2 H(+). In terms of biological role, catalyzes the methylthiolation of N6-(dimethylallyl)adenosine (i(6)A), leading to the formation of 2-methylthio-N6-(dimethylallyl)adenosine (ms(2)i(6)A) at position 37 in tRNAs that read codons beginning with uridine. In Synechocystis sp. (strain ATCC 27184 / PCC 6803 / Kazusa), this protein is tRNA-2-methylthio-N(6)-dimethylallyladenosine synthase.